An 864-amino-acid polypeptide reads, in one-letter code: A-kinase anchor protein 3 (864 aa).

At serine 12 the chain carries Phosphoserine; by STK33. A PKA-RII subunit binding domain region spans residues valine 125–alanine 138. Disordered regions lie at residues asparagine 190 to glycine 235 and alanine 251 to asparagine 281. Residues serine 204–leucine 218 are compositionally biased toward polar residues. Position 206 is a phosphoserine (serine 206). The span at lysine 219 to glycine 235 shows a compositional bias: basic and acidic residues. A Phosphoserine modification is found at serine 405. Position 406 is a phosphotyrosine (tyrosine 406). The tract at residues valine 619–proline 638 is disordered. The segment covering glutamate 627–proline 638 has biased composition (basic and acidic residues).

This sequence belongs to the AKAP110 family. As to quaternary structure, interacts with ROPN1 and ROPN1L. Interacts with QRICH2. In terms of processing, phosphorylated by STK33 during sperm flagella assembly. Phosphorylated on tyrosine.

The protein localises to the cytoplasmic vesicle. It is found in the secretory vesicle. It localises to the acrosome. The protein resides in the cell projection. Its subcellular location is the cilium. The protein localises to the flagellum. Functionally, structural component of sperm fibrous sheath. Required for the formation of the subcellular structure of the sperm flagellum, sperm motility and male fertility. The chain is A-kinase anchor protein 3 from Mus musculus (Mouse).